Consider the following 338-residue polypeptide: Queuosine 5'-phosphate N-glycosylase/hydrolase (338 aa).

N-acetylmethionine is present on methionine 1. The queuine site is built by histidine 51, phenylalanine 235, aspartate 237, aspartate 311, tyrosine 312, and aspartate 316. The active-site Nucleophile or transition state stabilizer is aspartate 237.

Belongs to the QNG1 protein family. Highly expressed in liver.

It carries out the reaction queuosine 5'-phosphate + H2O = queuine + D-ribose 5-phosphate. In terms of biological role, catalyzes the hydrolysis of queuosine 5'-phosphate, releasing the nucleobase queuine (q). Is required for salvage of queuine from exogenous queuosine (Q) that is imported and then converted to queuosine 5'-phosphate intracellularly. The sequence is that of Queuosine 5'-phosphate N-glycosylase/hydrolase from Mus musculus (Mouse).